Consider the following 349-residue polypeptide: Transcription initiation factor TFIID subunit 7 (349 aa).

Positions 3–5 (KSK) match the [KR]-[STA]-K motif motif. The tract at residues 105-126 (PPVEEPVASTDPKASKKKDKDK) is disordered. Phosphoserine occurs at positions 171, 200, 201, and 213. Residues 186 to 212 (EDETKEAENQGLDISSPGMSGHRQGHD) form a disordered region. The disordered stretch occupies residues 227–247 (SSSSEDEDETQHQDEEDINII). Residues 230-247 (SEDEDETQHQDEEDINII) show a composition bias toward acidic residues. A coiled-coil region spans residues 244 to 349 (INIIDTEEDL…QEELESLLEK (106 aa)). Ser-264 bears the Phosphoserine mark. Residues 328 to 349 (KEDREKEQLSSLQEELESLLEK) are disordered.

It belongs to the TAF7 family. As to quaternary structure, component of the TFIID basal transcription factor complex, composed of TATA-box-binding protein TBP, and a number of TBP-associated factors (TAFs), including TAF1, TAF2, TAF3, TAF4, TAF5, TAF6, TAF7, TAF8, TAF9, TAF10, TAF11, TAF12 and TAF13. Part of a TFIID-containing RNA polymerase II pre-initiation complex that is composed of TBP and at least GTF2A1, GTF2A2, GTF2E1, GTF2E2, GTF2F1, GTF2H2, GTF2H3, GTF2H4, GTF2H5, GTF2B, TCEA1, ERCC2, ERCC3, TAF1, TAF2, TAF3, TAF4, TAF5, TAF6, TAF7, TAF8, TAF9, TAF10, TAF11, TAF12 and TAF13. Interacts with TAF1; the interaction is direct. Interacts with TAF1, TAF5, TAF11, TAF12, and TAF13, but not with TAF10 or TBP. Component of some MLL1/MLL complex, at least composed of the core components KMT2A/MLL1, ASH2L, HCFC1/HCF1, WDR5 and RBBP5, as well as the facultative components BACC1, CHD8, E2F6, HSP70, INO80C, KANSL1, LAS1L, MAX, MCRS1, MGA, MYST1/MOF, PELP1, PHF20, PRP31, RING2, RUVB1/TIP49A, RUVB2/TIP49B, SENP3, TAF1, TAF4, TAF6, TAF7, TAF9 and TEX10. Interacts with CIITA and TAF1 and inhibits their acetyltransferase activity, and behaving as a repressor of CIITA- and TAF1-regulated promoters. Post-translationally, phosphorylated by CIITA. Phosphorylation at Ser-264 by TAF1 in early G1 phase disrupts binding to TAF1. Ubiquitinated by TRIM26; leading to proteasomal degradation. In terms of tissue distribution, ubiquitous.

It localises to the nucleus. Functionally, the TFIID basal transcription factor complex plays a major role in the initiation of RNA polymerase II (Pol II)-dependent transcription. TFIID recognizes and binds promoters with or without a TATA box via its subunit TBP, a TATA-box-binding protein, and promotes assembly of the pre-initiation complex (PIC). The TFIID complex consists of TBP and TBP-associated factors (TAFs), including TAF1, TAF2, TAF3, TAF4, TAF5, TAF6, TAF7, TAF8, TAF9, TAF10, TAF11, TAF12 and TAF13. TAF7 forms a promoter DNA binding subcomplex of TFIID, together with TAF1 and TAF2. Part of a TFIID complex containing TAF10 (TFIID alpha) and a TFIID complex lacking TAF10 (TFIID beta). This chain is Transcription initiation factor TFIID subunit 7 (TAF7), found in Homo sapiens (Human).